The primary structure comprises 155 residues: Protein-export protein SecB (155 aa).

It belongs to the SecB family. As to quaternary structure, homotetramer, a dimer of dimers. One homotetramer interacts with 1 SecA dimer.

Its subcellular location is the cytoplasm. Its function is as follows. One of the proteins required for the normal export of preproteins out of the cell cytoplasm. It is a molecular chaperone that binds to a subset of precursor proteins, maintaining them in a translocation-competent state. It also specifically binds to its receptor SecA. This chain is Protein-export protein SecB, found in Albidiferax ferrireducens (strain ATCC BAA-621 / DSM 15236 / T118) (Rhodoferax ferrireducens).